Here is a 498-residue protein sequence, read N- to C-terminus: Glutathione hydrolase 6 (498 aa).

Residues 1-49 (MDATTGAVLYQKLQLWEPGMESEEEEEEEEIAEPLVLSLRRLQNTPGNK) are Cytoplasmic-facing. A helical; Signal-anchor for type II membrane protein transmembrane segment spans residues 50 to 70 (VGGLPGAWTRLLAGLLLLAVS). Over 71-498 (SSLALRQLQG…PSGCCPFQGY (428 aa)) the chain is Extracellular. N-linked (GlcNAc...) asparagine glycans are attached at residues N162, N167, and N376.

This sequence belongs to the gamma-glutamyltransferase family. Heterodimer composed of the light and heavy chains. The active site is located in the light chain. Post-translationally, cleaved by autocatalysis into a large and a small subunit and the autocatalytic cleavage is essential to the functional activation of the enzyme.

The protein localises to the membrane. The catalysed reaction is an N-terminal (5-L-glutamyl)-[peptide] + an alpha-amino acid = 5-L-glutamyl amino acid + an N-terminal L-alpha-aminoacyl-[peptide]. The enzyme catalyses glutathione + H2O = L-cysteinylglycine + L-glutamate. It catalyses the reaction an S-substituted glutathione + H2O = an S-substituted L-cysteinylglycine + L-glutamate. It functions in the pathway sulfur metabolism; glutathione metabolism. In terms of biological role, hydrolyzes and transfers gamma-glutamyl moieties from glutathione and other gamma-glutamyl compounds to acceptors. The polypeptide is Glutathione hydrolase 6 (Rattus norvegicus (Rat)).